The sequence spans 443 residues: Tol-Pal system protein TolB (443 aa).

Positions 1–24 (MSFQIRVFTAILAVLSLFTAPVLA) are cleaved as a signal peptide. Residues 424-443 (LRPVRTPEGGSDPSWSPLQR) form a disordered region.

This sequence belongs to the TolB family. As to quaternary structure, the Tol-Pal system is composed of five core proteins: the inner membrane proteins TolA, TolQ and TolR, the periplasmic protein TolB and the outer membrane protein Pal. They form a network linking the inner and outer membranes and the peptidoglycan layer.

The protein resides in the periplasm. Part of the Tol-Pal system, which plays a role in outer membrane invagination during cell division and is important for maintaining outer membrane integrity. In Roseobacter denitrificans (strain ATCC 33942 / OCh 114) (Erythrobacter sp. (strain OCh 114)), this protein is Tol-Pal system protein TolB.